Reading from the N-terminus, the 501-residue chain is Large ribosomal subunit protein uL2m (501 aa).

Disordered regions lie at residues glycine 187–arginine 217 and alanine 459–asparagine 501. The span at asparagine 198–glycine 213 shows a compositional bias: polar residues. A compositionally biased stretch (basic and acidic residues) spans aspartate 464–threonine 474.

It belongs to the universal ribosomal protein uL2 family.

It localises to the mitochondrion. In Marchantia polymorpha (Common liverwort), this protein is Large ribosomal subunit protein uL2m (RPL2).